Here is a 220-residue protein sequence, read N- to C-terminus: ATP phosphoribosyltransferase (220 aa).

Belongs to the ATP phosphoribosyltransferase family. Short subfamily. In terms of assembly, heteromultimer composed of HisG and HisZ subunits.

It localises to the cytoplasm. The enzyme catalyses 1-(5-phospho-beta-D-ribosyl)-ATP + diphosphate = 5-phospho-alpha-D-ribose 1-diphosphate + ATP. The protein operates within amino-acid biosynthesis; L-histidine biosynthesis; L-histidine from 5-phospho-alpha-D-ribose 1-diphosphate: step 1/9. Functionally, catalyzes the condensation of ATP and 5-phosphoribose 1-diphosphate to form N'-(5'-phosphoribosyl)-ATP (PR-ATP). Has a crucial role in the pathway because the rate of histidine biosynthesis seems to be controlled primarily by regulation of HisG enzymatic activity. In Prochlorococcus marinus (strain NATL1A), this protein is ATP phosphoribosyltransferase.